Consider the following 428-residue polypeptide: PGL/p-HBAD biosynthesis glycosyltransferase MRA_2985 (428 aa).

Residues 1–23 (MEETSVAGDPGPDAGTSTAPNAA) are disordered.

It belongs to the UDP-glycosyltransferase family.

Involved in glycosylation steps downstream of mono-O-methyl-glycosyl-p-hydroxybenzoic acid derivative (p-HBAD I) and 2-O-methyl-rhamnosyl-phenolphthiocerol dimycocerosate (mycoside B) during the p-hydroxybenzoic acid derivatives (p-HBAD) and glycosylated phenolphthiocerol dimycocerosates (PGL) biosynthesis. The protein is PGL/p-HBAD biosynthesis glycosyltransferase MRA_2985 of Mycobacterium tuberculosis (strain ATCC 25177 / H37Ra).